Here is a 204-residue protein sequence, read N- to C-terminus: MASKGEEKPELVGSKQGIVSVTKAKHDQIVLVLRVVAFLATASATIVMGLNQETKTLLVGTIGTTPIRATLKAKFQHTPAFVFFVVANGLASVYNLVMLGVDVFGRKLDCKGLRLVIISILDMVIVAVVAAGASSAAFMAELGKNGNSHAKWNKICDKFESFCHQGGGALIPSFIALLLLFLISAISIITLHNQKLTSPHATTP.

At 1-28 (MASKGEEKPELVGSKQGIVSVTKAKHDQ) the chain is on the cytoplasmic side. The helical transmembrane segment at 29 to 49 (IVLVLRVVAFLATASATIVMG) threads the bilayer. Residues 50–80 (LNQETKTLLVGTIGTTPIRATLKAKFQHTPA) are Extracellular-facing. A helical transmembrane segment spans residues 81–101 (FVFFVVANGLASVYNLVMLGV). Over 102–114 (DVFGRKLDCKGLR) the chain is Cytoplasmic. A helical membrane pass occupies residues 115 to 135 (LVIISILDMVIVAVVAAGASS). Over 136-168 (AAFMAELGKNGNSHAKWNKICDKFESFCHQGGG) the chain is Extracellular. A helical membrane pass occupies residues 169–189 (ALIPSFIALLLLFLISAISII). The Cytoplasmic portion of the chain corresponds to 190 to 204 (TLHNQKLTSPHATTP).

The protein belongs to the Casparian strip membrane proteins (CASP) family. In terms of assembly, homodimer and heterodimers.

It is found in the cell membrane. The protein is CASP-like protein 1B2 of Vitis vinifera (Grape).